Here is an 802-residue protein sequence, read N- to C-terminus: Copper-exporting P-type ATPase (802 aa).

2 consecutive HMA domains span residues 5 to 71 (KEIA…YHVV) and 73 to 139 (EKAE…YKLK). 4 residues coordinate Cu(+): cysteine 16, cysteine 19, cysteine 84, and cysteine 87. 6 consecutive transmembrane segments (helical) span residues 162 to 181 (LIFS…SHFT), 196 to 218 (WMQF…VGAY), 230 to 249 (VLVA…LTFQ), 259 to 278 (GLYY…GKLF), 412 to 434 (ISGI…WYLW), and 447 to 469 (FIAV…SIMA). Aspartate 499 serves as the catalytic 4-aspartylphosphate intermediate. Mg(2+)-binding residues include aspartate 698 and aspartate 702. 2 helical membrane passes run 756-775 (LFWA…LGFL) and 779-796 (IAGA…LNAL).

It belongs to the cation transport ATPase (P-type) (TC 3.A.3) family. Type IB subfamily. Monomer at sub-stoichiometric copper concentrations. Homodimer at higher copper concentrations. Forms a heterodimer (electrostatic interactions) with CopZ during the transfer of Cu(+).

Its subcellular location is the cell membrane. The enzyme catalyses Cu(+)(in) + ATP + H2O = Cu(+)(out) + ADP + phosphate + H(+). Functionally, involved in copper export. In Bacillus subtilis (strain 168), this protein is Copper-exporting P-type ATPase (copA).